Consider the following 338-residue polypeptide: Lipoate-protein ligase A (338 aa).

The region spanning 29-216 is the BPL/LPL catalytic domain; the sequence is PADQRVLFLW…AYCEHYQQQV (188 aa). ATP is bound by residues R71, 76 to 79, and K134; that span reads GAVF. K134 provides a ligand contact to (R)-lipoate.

This sequence belongs to the LplA family. In terms of assembly, monomer.

It localises to the cytoplasm. It catalyses the reaction L-lysyl-[lipoyl-carrier protein] + (R)-lipoate + ATP = N(6)-[(R)-lipoyl]-L-lysyl-[lipoyl-carrier protein] + AMP + diphosphate + H(+). The protein operates within protein modification; protein lipoylation via exogenous pathway; protein N(6)-(lipoyl)lysine from lipoate: step 1/2. It functions in the pathway protein modification; protein lipoylation via exogenous pathway; protein N(6)-(lipoyl)lysine from lipoate: step 2/2. Catalyzes both the ATP-dependent activation of exogenously supplied lipoate to lipoyl-AMP and the transfer of the activated lipoyl onto the lipoyl domains of lipoate-dependent enzymes. The sequence is that of Lipoate-protein ligase A from Vibrio cholerae serotype O1 (strain ATCC 39541 / Classical Ogawa 395 / O395).